The following is a 370-amino-acid chain: 4-hydroxy-3-methylbut-2-en-1-yl diphosphate synthase (flavodoxin) (370 aa).

[4Fe-4S] cluster is bound by residues cysteine 268, cysteine 271, cysteine 303, and glutamate 310.

The protein belongs to the IspG family. Requires [4Fe-4S] cluster as cofactor.

It catalyses the reaction (2E)-4-hydroxy-3-methylbut-2-enyl diphosphate + oxidized [flavodoxin] + H2O + 2 H(+) = 2-C-methyl-D-erythritol 2,4-cyclic diphosphate + reduced [flavodoxin]. It participates in isoprenoid biosynthesis; isopentenyl diphosphate biosynthesis via DXP pathway; isopentenyl diphosphate from 1-deoxy-D-xylulose 5-phosphate: step 5/6. Functionally, converts 2C-methyl-D-erythritol 2,4-cyclodiphosphate (ME-2,4cPP) into 1-hydroxy-2-methyl-2-(E)-butenyl 4-diphosphate. The chain is 4-hydroxy-3-methylbut-2-en-1-yl diphosphate synthase (flavodoxin) from Bacillus pumilus (strain SAFR-032).